We begin with the raw amino-acid sequence, 237 residues long: Ribonuclease PH (237 aa).

Residues Arg86 and 124-126 (GTR) contribute to the phosphate site.

This sequence belongs to the RNase PH family. Homohexameric ring arranged as a trimer of dimers.

The enzyme catalyses tRNA(n+1) + phosphate = tRNA(n) + a ribonucleoside 5'-diphosphate. In terms of biological role, phosphorolytic 3'-5' exoribonuclease that plays an important role in tRNA 3'-end maturation. Removes nucleotide residues following the 3'-CCA terminus of tRNAs; can also add nucleotides to the ends of RNA molecules by using nucleoside diphosphates as substrates, but this may not be physiologically important. Probably plays a role in initiation of 16S rRNA degradation (leading to ribosome degradation) during starvation. The sequence is that of Ribonuclease PH from Nitrobacter winogradskyi (strain ATCC 25391 / DSM 10237 / CIP 104748 / NCIMB 11846 / Nb-255).